The following is a 139-amino-acid chain: ATP synthase epsilon chain (139 aa).

It belongs to the ATPase epsilon chain family. In terms of assembly, F-type ATPases have 2 components, CF(1) - the catalytic core - and CF(0) - the membrane proton channel. CF(1) has five subunits: alpha(3), beta(3), gamma(1), delta(1), epsilon(1). CF(0) has three main subunits: a, b and c.

It localises to the cell inner membrane. Its function is as follows. Produces ATP from ADP in the presence of a proton gradient across the membrane. This Haemophilus ducreyi (strain 35000HP / ATCC 700724) protein is ATP synthase epsilon chain.